Reading from the N-terminus, the 119-residue chain is Large ribosomal subunit protein uL18 (119 aa).

This sequence belongs to the universal ribosomal protein uL18 family. As to quaternary structure, part of the 50S ribosomal subunit; part of the 5S rRNA/L5/L18/L25 subcomplex. Contacts the 5S and 23S rRNAs.

Functionally, this is one of the proteins that bind and probably mediate the attachment of the 5S RNA into the large ribosomal subunit, where it forms part of the central protuberance. The polypeptide is Large ribosomal subunit protein uL18 (Xanthomonas oryzae pv. oryzae (strain PXO99A)).